The sequence spans 220 residues: uncharacterized protein (220 aa).

7 helical membrane-spanning segments follow: residues 25–45 (YFLLGLTLAFSAVVAYISMSL), 50–70 (PGLILMLAGFYGLLFLTYKLS), 74–94 (LGILSTFAFTGFLGYTLGPIL), 105–125 (IVVLALAGTAAVFFACSAYVL), 135–155 (SGTIFALFIVLLLGMVASFFF), 158–178 (PMLYIAISGLFVVFSTLGILY), and 196–216 (VSIFVSLYNLFISLLNIFSIL).

This sequence belongs to the BI1 family.

It localises to the cell membrane. This is an uncharacterized protein from Pasteurella multocida (strain Pm70).